The chain runs to 284 residues: uncharacterized protein (284 aa).

The disordered stretch occupies residues 236–284 (IDITNEADSSEIIDSEPSNKDETEKPSAQETDPFDGKPVDIKDDELPFD). Basic and acidic residues-rich tracts occupy residues 252-262 (PSNKDETEKPS) and 269-284 (FDGKPVDIKDDELPFD).

This is an uncharacterized protein from Bacillus subtilis (strain 168).